The sequence spans 361 residues: Putative agmatine deiminase (361 aa).

The active-site Amidino-cysteine intermediate is the C354.

The protein belongs to the agmatine deiminase family.

It catalyses the reaction agmatine + H2O = N-carbamoylputrescine + NH4(+). This is Putative agmatine deiminase from Streptococcus pneumoniae (strain 70585).